We begin with the raw amino-acid sequence, 361 residues long: Phospho-N-acetylmuramoyl-pentapeptide-transferase (361 aa).

A run of 10 helical transmembrane segments spans residues 28–48, 74–94, 99–119, 133–153, 168–188, 203–223, 236–256, 263–283, 288–308, and 338–358; these read LAII…IKFL, TMGG…LADL, IWIT…DDYA, SKFL…EYLD, LSLD…VGSS, VPIA…GNLI, TGEL…FLWF, VFMG…ISVI, IVLA…ILQV, and KVVI…LSSL.

The protein belongs to the glycosyltransferase 4 family. MraY subfamily. The cofactor is Mg(2+).

Its subcellular location is the cell inner membrane. It catalyses the reaction UDP-N-acetyl-alpha-D-muramoyl-L-alanyl-gamma-D-glutamyl-meso-2,6-diaminopimeloyl-D-alanyl-D-alanine + di-trans,octa-cis-undecaprenyl phosphate = di-trans,octa-cis-undecaprenyl diphospho-N-acetyl-alpha-D-muramoyl-L-alanyl-D-glutamyl-meso-2,6-diaminopimeloyl-D-alanyl-D-alanine + UMP. It functions in the pathway cell wall biogenesis; peptidoglycan biosynthesis. Catalyzes the initial step of the lipid cycle reactions in the biosynthesis of the cell wall peptidoglycan: transfers peptidoglycan precursor phospho-MurNAc-pentapeptide from UDP-MurNAc-pentapeptide onto the lipid carrier undecaprenyl phosphate, yielding undecaprenyl-pyrophosphoryl-MurNAc-pentapeptide, known as lipid I. The chain is Phospho-N-acetylmuramoyl-pentapeptide-transferase from Rickettsia prowazekii (strain Madrid E).